Reading from the N-terminus, the 313-residue chain is Biotin synthase (313 aa).

Positions 28–258 (NFGNDIELCS…LFPQARLRLS (231 aa)) constitute a Radical SAM core domain. The [4Fe-4S] cluster site is built by C46, C50, and C53. [2Fe-2S] cluster contacts are provided by C90, C121, C181, and R256.

It belongs to the radical SAM superfamily. Biotin synthase family. As to quaternary structure, homodimer. [4Fe-4S] cluster serves as cofactor. It depends on [2Fe-2S] cluster as a cofactor.

It carries out the reaction (4R,5S)-dethiobiotin + (sulfur carrier)-SH + 2 reduced [2Fe-2S]-[ferredoxin] + 2 S-adenosyl-L-methionine = (sulfur carrier)-H + biotin + 2 5'-deoxyadenosine + 2 L-methionine + 2 oxidized [2Fe-2S]-[ferredoxin]. The protein operates within cofactor biosynthesis; biotin biosynthesis; biotin from 7,8-diaminononanoate: step 2/2. In terms of biological role, catalyzes the conversion of dethiobiotin (DTB) to biotin by the insertion of a sulfur atom into dethiobiotin via a radical-based mechanism. The sequence is that of Biotin synthase from Francisella tularensis subsp. tularensis (strain WY96-3418).